Consider the following 449-residue polypeptide: Phosphomethylpyrimidine synthase (449 aa).

Substrate is bound by residues Asn80, Met109, Tyr138, His173, 193 to 195, 234 to 237, and Glu273; these read SRG and DSLR. His277 lines the Zn(2+) pocket. Tyr300 contributes to the substrate binding site. Zn(2+) is bound at residue His341. Cys421, Cys424, and Cys429 together coordinate [4Fe-4S] cluster.

This sequence belongs to the ThiC family. Homodimer. It depends on [4Fe-4S] cluster as a cofactor.

It catalyses the reaction 5-amino-1-(5-phospho-beta-D-ribosyl)imidazole + S-adenosyl-L-methionine = 4-amino-2-methyl-5-(phosphooxymethyl)pyrimidine + CO + 5'-deoxyadenosine + formate + L-methionine + 3 H(+). It participates in cofactor biosynthesis; thiamine diphosphate biosynthesis. Catalyzes the synthesis of the hydroxymethylpyrimidine phosphate (HMP-P) moiety of thiamine from aminoimidazole ribotide (AIR) in a radical S-adenosyl-L-methionine (SAM)-dependent reaction. The sequence is that of Phosphomethylpyrimidine synthase from Campylobacter hominis (strain ATCC BAA-381 / DSM 21671 / CCUG 45161 / LMG 19568 / NCTC 13146 / CH001A).